A 204-amino-acid chain; its full sequence is V-set and transmembrane domain-containing protein 2-like protein (204 aa).

The first 24 residues, 1 to 24 (MGAPLAVALGALHYLALFLQLGGA), serve as a signal peptide directing secretion. An Ig-like domain is found at 41–158 (ALFTETPHDM…DGKARHHKVK (118 aa)). The cysteines at positions 62 and 142 are disulfide-linked. The interval 168–204 (NSVLHLPEAPPAAPAPPPPKPGKELRKRSVDQEACSL) is disordered. Pro residues predominate over residues 175–187 (EAPPAAPAPPPPK). Residues 188–198 (PGKELRKRSVD) are compositionally biased toward basic and acidic residues.

The polypeptide is V-set and transmembrane domain-containing protein 2-like protein (VSTM2L) (Homo sapiens (Human)).